We begin with the raw amino-acid sequence, 69 residues long: Putative membrane protein insertion efficiency factor (69 aa).

The protein belongs to the UPF0161 family.

The protein resides in the cell inner membrane. In terms of biological role, could be involved in insertion of integral membrane proteins into the membrane. This is Putative membrane protein insertion efficiency factor from Magnetococcus marinus (strain ATCC BAA-1437 / JCM 17883 / MC-1).